The following is a 451-amino-acid chain: tRNA modification GTPase MnmE (451 aa).

The (6S)-5-formyl-5,6,7,8-tetrahydrofolate site is built by arginine 23, glutamate 80, and lysine 119. The TrmE-type G domain occupies 215–372 (GIKVVLAGQP…LRAALLKTAG (158 aa)). Residue asparagine 225 coordinates K(+). GTP is bound by residues 225–230 (NVGKSS), 244–250 (TDIPGTT), and 269–272 (DTAG). Serine 229 contacts Mg(2+). Residues threonine 244, isoleucine 246, and threonine 249 each contribute to the K(+) site. Threonine 250 contacts Mg(2+). Lysine 451 contacts (6S)-5-formyl-5,6,7,8-tetrahydrofolate.

It belongs to the TRAFAC class TrmE-Era-EngA-EngB-Septin-like GTPase superfamily. TrmE GTPase family. In terms of assembly, homodimer. Heterotetramer of two MnmE and two MnmG subunits. The cofactor is K(+).

The protein localises to the cytoplasm. Exhibits a very high intrinsic GTPase hydrolysis rate. Involved in the addition of a carboxymethylaminomethyl (cmnm) group at the wobble position (U34) of certain tRNAs, forming tRNA-cmnm(5)s(2)U34. This Nitrosomonas europaea (strain ATCC 19718 / CIP 103999 / KCTC 2705 / NBRC 14298) protein is tRNA modification GTPase MnmE.